Reading from the N-terminus, the 491-residue chain is Protein nucleotidyltransferase YdiU (491 aa).

ATP-binding residues include Gly-92, Gly-94, Arg-95, Lys-115, Asp-127, Gly-128, Arg-178, and Arg-185. Catalysis depends on Asp-254, which acts as the Proton acceptor. Positions 255 and 264 each coordinate Mg(2+). Residue Asp-264 coordinates ATP.

The protein belongs to the SELO family. The cofactor is Mg(2+). Mn(2+) is required as a cofactor.

It catalyses the reaction L-seryl-[protein] + ATP = 3-O-(5'-adenylyl)-L-seryl-[protein] + diphosphate. The enzyme catalyses L-threonyl-[protein] + ATP = 3-O-(5'-adenylyl)-L-threonyl-[protein] + diphosphate. It carries out the reaction L-tyrosyl-[protein] + ATP = O-(5'-adenylyl)-L-tyrosyl-[protein] + diphosphate. The catalysed reaction is L-histidyl-[protein] + UTP = N(tele)-(5'-uridylyl)-L-histidyl-[protein] + diphosphate. It catalyses the reaction L-seryl-[protein] + UTP = O-(5'-uridylyl)-L-seryl-[protein] + diphosphate. The enzyme catalyses L-tyrosyl-[protein] + UTP = O-(5'-uridylyl)-L-tyrosyl-[protein] + diphosphate. Nucleotidyltransferase involved in the post-translational modification of proteins. It can catalyze the addition of adenosine monophosphate (AMP) or uridine monophosphate (UMP) to a protein, resulting in modifications known as AMPylation and UMPylation. This is Protein nucleotidyltransferase YdiU from Pseudarthrobacter chlorophenolicus (strain ATCC 700700 / DSM 12829 / CIP 107037 / JCM 12360 / KCTC 9906 / NCIMB 13794 / A6) (Arthrobacter chlorophenolicus).